The primary structure comprises 105 residues: Cytochrome c-553-like (105 aa).

A signal peptide spans 1-29 (MAGIVSLVILAVALFSFMNFDPYVSQVLA). Heme c-binding residues include Cys45, Cys48, His49, and Met85.

Post-translationally, binds 1 heme c group covalently per subunit.

This is Cytochrome c-553-like (cytM) from Synechocystis sp. (strain ATCC 27184 / PCC 6803 / Kazusa).